A 349-amino-acid polypeptide reads, in one-letter code: Isopentenyl-diphosphate delta-isomerase (349 aa).

Substrate is bound at residue 6 to 7 (RK). FMN-binding positions include 62–64 (AMT), Ser93, and Asn122. Gln152 contributes to the substrate binding site. Glu153 contacts Mg(2+). FMN is bound by residues Lys184, Thr214, 259–261 (GVR), and 280–281 (AG).

Belongs to the IPP isomerase type 2 family. Homooctamer. Dimer of tetramers. Requires FMN as cofactor. The cofactor is NADPH. Mg(2+) serves as cofactor.

It is found in the cytoplasm. It carries out the reaction isopentenyl diphosphate = dimethylallyl diphosphate. Functionally, involved in the biosynthesis of isoprenoids. Catalyzes the 1,3-allylic rearrangement of the homoallylic substrate isopentenyl (IPP) to its allylic isomer, dimethylallyl diphosphate (DMAPP). This Geobacillus sp. (strain WCH70) protein is Isopentenyl-diphosphate delta-isomerase.